A 689-amino-acid chain; its full sequence is Outer spore wall assembly protein SHE10 (689 aa).

A signal peptide spans M1 to L18. The disordered stretch occupies residues T259–A308. Low complexity predominate over residues N270–A308. A coiled-coil region spans residues N406–T435. The segment covering E610–S626 has biased composition (basic and acidic residues). The interval E610–I689 is disordered. Polar residues-rich tracts occupy residues T627–T637, Q655–S670, and M677–I689.

The protein belongs to the SHE10 family. As to quaternary structure, component of the mitochondria-localized RNase mitochondrial RNA-processing (RNase MRP) composed of one single RNA encoded by the NME1 gene and at least 31 proteins. Absent in the nucleus-localized RNase MRP (NuMRP).

Its subcellular location is the mitochondrion. Its function is as follows. Involved in spore wall assembly. May be a component of the mitochondrial RNase MRP (MtMRP), a ribonucleoprotein endoribonuclease involved in the cleaving RNA transcripts to generate primers for DNA replication in mitochondria. This Zygosaccharomyces rouxii (strain ATCC 2623 / CBS 732 / NBRC 1130 / NCYC 568 / NRRL Y-229) protein is Outer spore wall assembly protein SHE10.